The sequence spans 209 residues: MTRFVLGSASQGRLGVLRQAGIDPEVVVSDVDEDALLASLDPELPPEAVVAKLANAKALSVAAALPQELLADCVVLGCDSMLYLDGRLSGKPGTPEAARRQWEQMAGTTGHLLTGHALLRLRDGVITHTEGDTGSTAVHFGRPSEAELTRYVDSGEPIHVAGAFTLDGLGGWFIDGIDGDPSNVIGVSLPLVQRLISRTGLSISEFWTR.

Asp79 functions as the Proton acceptor in the catalytic mechanism.

The protein belongs to the Maf family. A divalent metal cation is required as a cofactor.

It is found in the cytoplasm. It carries out the reaction a ribonucleoside 5'-triphosphate + H2O = a ribonucleoside 5'-phosphate + diphosphate + H(+). It catalyses the reaction a 2'-deoxyribonucleoside 5'-triphosphate + H2O = a 2'-deoxyribonucleoside 5'-phosphate + diphosphate + H(+). Nucleoside triphosphate pyrophosphatase. May have a dual role in cell division arrest and in preventing the incorporation of modified nucleotides into cellular nucleic acids. This Mycolicibacterium gilvum (strain PYR-GCK) (Mycobacterium gilvum (strain PYR-GCK)) protein is Nucleoside triphosphate pyrophosphatase.